We begin with the raw amino-acid sequence, 237 residues long: Cysteine-rich venom protein tigrin (237 aa).

A signal peptide spans 1–18; the sequence is MIVFILLSLAAVLRQSFG. The region spanning 37–165 is the SCP domain; sequence VNIHNSFRRS…LYNYFYVCQY (129 aa). 8 cysteine pairs are disulfide-bonded: C74–C152, C91–C166, C147–C163, C185–C192, C188–C197, C201–C232, C210–C226, and C217–C230. Residues 201 to 232 enclose the ShKT domain; it reads CTHKDDYNNCNSLVSDCQSDWDKSHCPATCFC.

This sequence belongs to the CRISP family. As to expression, expressed by the venom gland.

Its subcellular location is the secreted. This protein does not inhibit smooth muscle contraction elicited by high potassium levels or caffeine. This Rhabdophis tigrinus tigrinus (Tiger keelback snake) protein is Cysteine-rich venom protein tigrin.